The chain runs to 461 residues: L-serine dehydratase (461 aa).

This sequence belongs to the iron-sulfur dependent L-serine dehydratase family. The cofactor is [4Fe-4S] cluster.

It catalyses the reaction L-serine = pyruvate + NH4(+). It functions in the pathway carbohydrate biosynthesis; gluconeogenesis. This Mycobacterium bovis (strain ATCC BAA-935 / AF2122/97) protein is L-serine dehydratase (sdaA).